Reading from the N-terminus, the 1428-residue chain is DNA-directed RNA polymerase subunit beta' (1428 aa).

Zn(2+) contacts are provided by C66, C68, C81, and C84. The Mg(2+) site is built by D472, D474, and D476. The Zn(2+) site is built by C816, C890, C897, and C900.

It belongs to the RNA polymerase beta' chain family. The RNAP catalytic core consists of 2 alpha, 1 beta, 1 beta' and 1 omega subunit. When a sigma factor is associated with the core the holoenzyme is formed, which can initiate transcription. It depends on Mg(2+) as a cofactor. Zn(2+) is required as a cofactor.

It catalyses the reaction RNA(n) + a ribonucleoside 5'-triphosphate = RNA(n+1) + diphosphate. Functionally, DNA-dependent RNA polymerase catalyzes the transcription of DNA into RNA using the four ribonucleoside triphosphates as substrates. The polypeptide is DNA-directed RNA polymerase subunit beta' (Phocaeicola vulgatus (strain ATCC 8482 / DSM 1447 / JCM 5826 / CCUG 4940 / NBRC 14291 / NCTC 11154) (Bacteroides vulgatus)).